The sequence spans 570 residues: Proline--tRNA ligase (570 aa).

This sequence belongs to the class-II aminoacyl-tRNA synthetase family. ProS type 1 subfamily. As to quaternary structure, homodimer.

Its subcellular location is the cytoplasm. The catalysed reaction is tRNA(Pro) + L-proline + ATP = L-prolyl-tRNA(Pro) + AMP + diphosphate. In terms of biological role, catalyzes the attachment of proline to tRNA(Pro) in a two-step reaction: proline is first activated by ATP to form Pro-AMP and then transferred to the acceptor end of tRNA(Pro). As ProRS can inadvertently accommodate and process non-cognate amino acids such as alanine and cysteine, to avoid such errors it has two additional distinct editing activities against alanine. One activity is designated as 'pretransfer' editing and involves the tRNA(Pro)-independent hydrolysis of activated Ala-AMP. The other activity is designated 'posttransfer' editing and involves deacylation of mischarged Ala-tRNA(Pro). The misacylated Cys-tRNA(Pro) is not edited by ProRS. This chain is Proline--tRNA ligase, found in Shewanella sp. (strain MR-4).